The following is a 603-amino-acid chain: Carbon catabolite repressor protein 4 homolog 2 (603 aa).

Positions 115-136 (ENNANEDDDLNRNNSAGSGSLA) are disordered. The span at 126 to 136 (RNNSAGSGSLA) shows a compositional bias: low complexity. Residue E302 participates in Mg(2+) binding.

This sequence belongs to the CCR4/nocturin family. Component of the CCR4-NOT complex, at least composed of CRR4 and CAF1 proteins. Mg(2+) is required as a cofactor.

Its subcellular location is the nucleus. It is found in the cytoplasm. The enzyme catalyses Exonucleolytic cleavage of poly(A) to 5'-AMP.. Acts as a catalytic component of the CCR4-NOT core complex, which in the nucleus seems to be a general transcription factor, and in the cytoplasm the major mRNA deadenylase involved in mRNA turnover. The chain is Carbon catabolite repressor protein 4 homolog 2 (CCR4-2) from Arabidopsis thaliana (Mouse-ear cress).